Reading from the N-terminus, the 407-residue chain is Phospholipase A1-II 7 (407 aa).

The active-site Acyl-ester intermediate is the S230. Active-site charge relay system residues include S230, D299, and H336.

Belongs to the AB hydrolase superfamily. Lipase family.

It is found in the cytoplasm. Acylhydrolase that catalyzes the hydrolysis of phospholipids at the sn-1 position. The polypeptide is Phospholipase A1-II 7 (Oryza sativa subsp. indica (Rice)).